The primary structure comprises 198 residues: Holliday junction branch migration complex subunit RuvA (198 aa).

The interval 1–63 (MYDYIKGQLT…EDAHLLFGFH (63 aa)) is domain I. The interval 64–142 (TEDEKDVFLK…EAPQETGHTK (79 aa)) is domain II. The segment at 143-147 (ARSNK) is flexible linker. Residues 148-198 (AGNTQLDEAIEALLALGYKAKELKKIRAFFEGTSETAEQYIKSALKLLMKG) form a domain III region.

This sequence belongs to the RuvA family. In terms of assembly, homotetramer. Forms an RuvA(8)-RuvB(12)-Holliday junction (HJ) complex. HJ DNA is sandwiched between 2 RuvA tetramers; dsDNA enters through RuvA and exits via RuvB. An RuvB hexamer assembles on each DNA strand where it exits the tetramer. Each RuvB hexamer is contacted by two RuvA subunits (via domain III) on 2 adjacent RuvB subunits; this complex drives branch migration. In the full resolvosome a probable DNA-RuvA(4)-RuvB(12)-RuvC(2) complex forms which resolves the HJ.

The protein resides in the cytoplasm. In terms of biological role, the RuvA-RuvB-RuvC complex processes Holliday junction (HJ) DNA during genetic recombination and DNA repair, while the RuvA-RuvB complex plays an important role in the rescue of blocked DNA replication forks via replication fork reversal (RFR). RuvA specifically binds to HJ cruciform DNA, conferring on it an open structure. The RuvB hexamer acts as an ATP-dependent pump, pulling dsDNA into and through the RuvAB complex. HJ branch migration allows RuvC to scan DNA until it finds its consensus sequence, where it cleaves and resolves the cruciform DNA. This chain is Holliday junction branch migration complex subunit RuvA, found in Streptococcus pyogenes serotype M1.